Here is a 331-residue protein sequence, read N- to C-terminus: Phenylalanine--tRNA ligase alpha subunit (331 aa).

Glu258 contributes to the Mg(2+) binding site.

Belongs to the class-II aminoacyl-tRNA synthetase family. Phe-tRNA synthetase alpha subunit type 1 subfamily. As to quaternary structure, tetramer of two alpha and two beta subunits. Mg(2+) serves as cofactor.

The protein resides in the cytoplasm. It carries out the reaction tRNA(Phe) + L-phenylalanine + ATP = L-phenylalanyl-tRNA(Phe) + AMP + diphosphate + H(+). The protein is Phenylalanine--tRNA ligase alpha subunit (pheS) of Synechocystis sp. (strain ATCC 27184 / PCC 6803 / Kazusa).